Here is an 817-residue protein sequence, read N- to C-terminus: Anaphase-promoting complex subunit 4 (817 aa).

Tyr-469 is subject to Phosphotyrosine. Ser-757 and Ser-758 each carry phosphoserine. Lys-772 participates in a covalent cross-link: Glycyl lysine isopeptide (Lys-Gly) (interchain with G-Cter in SUMO2). 2 positions are modified to phosphoserine: Ser-777 and Ser-779. Lys-798 is covalently cross-linked (Glycyl lysine isopeptide (Lys-Gly) (interchain with G-Cter in SUMO2)).

The protein belongs to the APC4 family. The mammalian APC/C is composed at least of 14 distinct subunits ANAPC1, ANAPC2, CDC27/APC3, ANAPC4, ANAPC5, CDC16/APC6, ANAPC7, CDC23/APC8, ANAPC10, ANAPC11, CDC26/APC12, ANAPC13, ANAPC15 and ANAPC16 that assemble into a complex of at least 19 chains with a combined molecular mass of around 1.2 MDa; APC/C interacts with FZR1 and FBXO5. In the context of the APC/C complex, directly interacts with UBE2S.

Its subcellular location is the nucleus. The protein operates within protein modification; protein ubiquitination. In terms of biological role, component of the anaphase promoting complex/cyclosome (APC/C), a cell cycle-regulated E3 ubiquitin ligase that controls progression through mitosis and the G1 phase of the cell cycle. The APC/C complex acts by mediating ubiquitination and subsequent degradation of target proteins: it mainly mediates the formation of 'Lys-11'-linked polyubiquitin chains and, to a lower extent, the formation of 'Lys-48'- and 'Lys-63'-linked polyubiquitin chains. The APC/C complex catalyzes assembly of branched 'Lys-11'-/'Lys-48'-linked branched ubiquitin chains on target proteins. The protein is Anaphase-promoting complex subunit 4 (ANAPC4) of Pongo abelii (Sumatran orangutan).